The sequence spans 239 residues: Ribonuclease PH (239 aa).

Phosphate-binding positions include R86 and G124 to R126.

It belongs to the RNase PH family. In terms of assembly, homohexameric ring arranged as a trimer of dimers.

The catalysed reaction is tRNA(n+1) + phosphate = tRNA(n) + a ribonucleoside 5'-diphosphate. Functionally, phosphorolytic 3'-5' exoribonuclease that plays an important role in tRNA 3'-end maturation. Removes nucleotide residues following the 3'-CCA terminus of tRNAs; can also add nucleotides to the ends of RNA molecules by using nucleoside diphosphates as substrates, but this may not be physiologically important. Probably plays a role in initiation of 16S rRNA degradation (leading to ribosome degradation) during starvation. The sequence is that of Ribonuclease PH from Rhizobium leguminosarum bv. trifolii (strain WSM2304).